The primary structure comprises 198 residues: MPLPPSAAPDPIARFRDALARAAAASPHDATAAALATADARGAPSVRMVLVKSADARGFAFFTNRESRKARDLAANPRAALCFHWPALEEQVRVEGAVTPLPDAEADAYFRSRPRESRVGAWASRQSAPLGDRAELEAAVREVEARFPGDEIPRPPFWGGYLVAPERIEFWRSGPGRLHHRTVYVRRGDGWEVGALQP.

FMN is bound by residues 47-52 (RMVLVK), 62-63 (FT), arginine 68, lysine 69, and glutamine 91. Lysine 52 contributes to the substrate binding site. Positions 109, 113, and 117 each coordinate substrate. Residues 126–127 (QS) and tryptophan 171 contribute to the FMN site. A substrate-binding site is contributed by 177 to 179 (RLH). Position 181 (arginine 181) interacts with FMN.

It belongs to the pyridoxamine 5'-phosphate oxidase family. In terms of assembly, homodimer. Requires FMN as cofactor.

It carries out the reaction pyridoxamine 5'-phosphate + O2 + H2O = pyridoxal 5'-phosphate + H2O2 + NH4(+). The enzyme catalyses pyridoxine 5'-phosphate + O2 = pyridoxal 5'-phosphate + H2O2. It functions in the pathway cofactor metabolism; pyridoxal 5'-phosphate salvage; pyridoxal 5'-phosphate from pyridoxamine 5'-phosphate: step 1/1. Its pathway is cofactor metabolism; pyridoxal 5'-phosphate salvage; pyridoxal 5'-phosphate from pyridoxine 5'-phosphate: step 1/1. Catalyzes the oxidation of either pyridoxine 5'-phosphate (PNP) or pyridoxamine 5'-phosphate (PMP) into pyridoxal 5'-phosphate (PLP). In Anaeromyxobacter dehalogenans (strain 2CP-C), this protein is Pyridoxine/pyridoxamine 5'-phosphate oxidase.